The chain runs to 238 residues: Ankyrin repeat domain-containing protein 49 (238 aa).

Residues 38 to 57 (TGTQSLWVGNSDEDEEQEEK) are disordered. S48 is modified (phosphoserine). A compositionally biased stretch (acidic residues) spans 48–57 (SDEDEEQEEK). 4 ANK repeats span residues 72-105 (DPSK…TRDE), 106-135 (DEYT…DVHA), 139-168 (DGWT…DINA), and 172-205 (GLLT…ELKN).

In terms of tissue distribution, expressed in spermatogonia, spermatocytes and round spermatids.

It localises to the nucleus. Functionally, may have a role in spermatogenesis where it promotes autophagy in response to serum starvation, via the NF-kappaB pathway. The polypeptide is Ankyrin repeat domain-containing protein 49 (Ankrd49) (Mus musculus (Mouse)).